We begin with the raw amino-acid sequence, 210 residues long: Capsid protein (210 aa).

Positions 1–14 (MARLPKRKNRRNEK) are enriched in basic residues. The interval 1 to 21 (MARLPKRKNRRNEKKKNANAS) is disordered.

Its subcellular location is the virion. In terms of biological role, capsid protein self-assembles to form a baciliform capsid with a T=1 symmetry, about 18 nm in diameter. The capsid encapsulates three genomic RNAs (Potential). The polypeptide is Capsid protein (Cucumis melo (Muskmelon)).